A 318-amino-acid polypeptide reads, in one-letter code: Homoserine kinase (318 aa).

Position 97-107 (97-107) interacts with ATP; sequence PIGSGLGSSAC.

It belongs to the GHMP kinase family. Homoserine kinase subfamily.

The protein resides in the cytoplasm. The catalysed reaction is L-homoserine + ATP = O-phospho-L-homoserine + ADP + H(+). The protein operates within amino-acid biosynthesis; L-threonine biosynthesis; L-threonine from L-aspartate: step 4/5. Catalyzes the ATP-dependent phosphorylation of L-homoserine to L-homoserine phosphate. This Vibrio vulnificus (strain CMCP6) protein is Homoserine kinase.